The primary structure comprises 372 residues: Serine protease 44 (372 aa).

The N-terminal stretch at 1–25 (MAFQGCDCFGLLVWLLLLQTRLGKA) is a signal peptide. Residues 26 to 351 (RMVPGTPSLS…KELSRASCWK (326 aa)) lie on the Extracellular side of the membrane. The tract at residues 31–72 (TPSLSPLPSENGLDDSGVNPQERPLTGMPETSLPRKPGDSTR) is disordered. One can recognise a Peptidase S1 domain in the interval 112–345 (IVGGRPAPAR…YRDWIIKELS (234 aa)). Cysteines 137 and 153 form a disulfide. Residues histidine 152 and aspartate 197 each act as charge relay system in the active site. Asparagine 208 carries N-linked (GlcNAc...) asparagine glycosylation. Cystine bridges form between cysteine 231-cysteine 303, cysteine 262-cysteine 283, and cysteine 293-cysteine 321. Serine 297 acts as the Charge relay system in catalysis. A helical transmembrane segment spans residues 352–372 (LSGFLVLSVCLVLHLAIVVAL).

The protein belongs to the peptidase S1 family. As to expression, testis-specific. Expressed by primary and secondary spermatocytes.

It localises to the membrane. The protein resides in the cytoplasm. Its function is as follows. Lacks protease activity in vitro. This Mus musculus (Mouse) protein is Serine protease 44.